The chain runs to 500 residues: AAA-ATPase At3g28580 (500 aa).

The helical transmembrane segment at 7–29 (LWTNTGSALATLMFVYTIFKQFF) threads the bilayer. The disordered stretch occupies residues 174–193 (NRERKLYSNTPGQSHGNNSK). A compositionally biased stretch (polar residues) spans 180–193 (YSNTPGQSHGNNSK). 247–254 (GPPGTGKS) lines the ATP pocket. The tract at residues 462–500 (KEEAKKKVEEEEEEKQRKKEKVKEIEAEKEKKKKIEEEN) is disordered.

It belongs to the AAA ATPase family. BCS1 subfamily. The cofactor is Mg(2+).

The protein resides in the membrane. The enzyme catalyses ATP + H2O = ADP + phosphate + H(+). This chain is AAA-ATPase At3g28580, found in Arabidopsis thaliana (Mouse-ear cress).